A 98-amino-acid chain; its full sequence is NADH-ubiquinone oxidoreductase chain 4L (98 aa).

The next 3 helical transmembrane spans lie at 1-21, 28-48, and 59-79; these read MMSI…GVLI, STLL…ALLI, and APLI…ALLV.

Belongs to the complex I subunit 4L family. In terms of assembly, core subunit of respiratory chain NADH dehydrogenase (Complex I) which is composed of 45 different subunits.

Its subcellular location is the mitochondrion inner membrane. It carries out the reaction a ubiquinone + NADH + 5 H(+)(in) = a ubiquinol + NAD(+) + 4 H(+)(out). Its function is as follows. Core subunit of the mitochondrial membrane respiratory chain NADH dehydrogenase (Complex I) which catalyzes electron transfer from NADH through the respiratory chain, using ubiquinone as an electron acceptor. Part of the enzyme membrane arm which is embedded in the lipid bilayer and involved in proton translocation. The polypeptide is NADH-ubiquinone oxidoreductase chain 4L (MT-ND4L) (Osphranter robustus (Wallaroo)).